Reading from the N-terminus, the 215-residue chain is MNLILMGLPGAGKGTQAAKINEKYNIPHISTGDMFRLAIKEGTELGKKAKEFMDQGDLVPDEVTVGIVKERLAMDDCANGFLLDGFPRTTRQAEELQNLLSDLGKSIDYVIHVDVPEEKLVERLTGRRICPTCGTAYHVVYNPPKEEGICDKDGSQLIQRDDDQPETVKNRLAVNIEQTQPLLDFYQDKGYLVKVNGDRDINVVFQDIESILEKK.

10–15 (GAGKGT) is a binding site for ATP. The NMP stretch occupies residues 30–59 (STGDMFRLAIKEGTELGKKAKEFMDQGDLV). AMP contacts are provided by residues threonine 31, arginine 36, 57 to 59 (DLV), 85 to 88 (GFPR), and glutamine 92. Positions 126–163 (GRRICPTCGTAYHVVYNPPKEEGICDKDGSQLIQRDDD) are LID. Arginine 127 contacts ATP. Residues cysteine 130, cysteine 133, cysteine 150, and aspartate 153 each coordinate Zn(2+). The AMP site is built by arginine 160 and arginine 171. Arginine 199 is a binding site for ATP.

The protein belongs to the adenylate kinase family. Monomer.

It is found in the cytoplasm. It carries out the reaction AMP + ATP = 2 ADP. The protein operates within purine metabolism; AMP biosynthesis via salvage pathway; AMP from ADP: step 1/1. Functionally, catalyzes the reversible transfer of the terminal phosphate group between ATP and AMP. Plays an important role in cellular energy homeostasis and in adenine nucleotide metabolism. This Oceanobacillus iheyensis (strain DSM 14371 / CIP 107618 / JCM 11309 / KCTC 3954 / HTE831) protein is Adenylate kinase.